The sequence spans 254 residues: Type III pantothenate kinase 2 (254 aa).

Position 6–13 (6–13 (DMGNSHIH)) interacts with ATP. A substrate-binding site is contributed by 107–110 (GADR). The active-site Proton acceptor is Asp109. Asp130 is a binding site for K(+). Thr133 contributes to the ATP binding site. Position 185 (Thr185) interacts with substrate.

Belongs to the type III pantothenate kinase family. As to quaternary structure, homodimer. Requires NH4(+) as cofactor. It depends on K(+) as a cofactor.

It localises to the cytoplasm. It carries out the reaction (R)-pantothenate + ATP = (R)-4'-phosphopantothenate + ADP + H(+). Its pathway is cofactor biosynthesis; coenzyme A biosynthesis; CoA from (R)-pantothenate: step 1/5. Catalyzes the phosphorylation of pantothenate (Pan), the first step in CoA biosynthesis. This is Type III pantothenate kinase 2 from Francisella tularensis subsp. holarctica (strain LVS).